The chain runs to 1174 residues: Carboxylic acid reductase (1174 aa).

AMP is bound by residues H297, S392, 413 to 414 (EG), T418, D491, 503 to 506 (YLDR), K512, and K612. Positions 651 to 726 (APVLVTVCRA…ALADYVEAAR (76 aa)) constitute a Carrier domain. Residue S685 is modified to O-(pantetheine 4'-phosphoryl)serine. NADP(+)-binding positions include 787-791 (TGFLG), R814, R824, 854-855 (DK), 880-882 (PAA), 919-920 (TS), Y956, and K960.

Belongs to the ATP-dependent AMP-binding enzyme family. Carboxylic acid reductase subfamily. The cofactor is pantetheine 4'-phosphate.

It carries out the reaction a carboxylate + ATP + NADPH + H(+) = an aldehyde + AMP + diphosphate + NADP(+). Functionally, catalyzes the ATP- and NADPH-dependent reduction of carboxylic acids to the corresponding aldehydes. Catalyzes the reduction of a wide range of aliphatic fatty acids (C6-C18) into their corresponding aldehydes. Can also reduce benzoate to benzaldehyde. Has a preference for NADPH over NADH as the electron donor. The chain is Carboxylic acid reductase from Mycobacterium marinum (strain ATCC BAA-535 / M).